A 37-amino-acid chain; its full sequence is Cytochrome b6-f complex subunit 5 (37 aa).

Residues 5 to 25 (LLFGIVLGLIPVTLVGLFVAA) traverse the membrane as a helical segment.

This sequence belongs to the PetG family. The 4 large subunits of the cytochrome b6-f complex are cytochrome b6, subunit IV (17 kDa polypeptide, PetD), cytochrome f and the Rieske protein, while the 4 small subunits are PetG, PetL, PetM and PetN. The complex functions as a dimer.

It localises to the plastid. The protein localises to the chloroplast thylakoid membrane. In terms of biological role, component of the cytochrome b6-f complex, which mediates electron transfer between photosystem II (PSII) and photosystem I (PSI), cyclic electron flow around PSI, and state transitions. PetG is required for either the stability or assembly of the cytochrome b6-f complex. The protein is Cytochrome b6-f complex subunit 5 of Rhodomonas salina (Cryptomonas salina).